Consider the following 431-residue polypeptide: Glucose-1-phosphate adenylyltransferase (431 aa).

Alpha-D-glucose 1-phosphate-binding positions include glycine 163, glutamate 178 to lysine 179, and serine 210.

The protein belongs to the bacterial/plant glucose-1-phosphate adenylyltransferase family. Homotetramer.

It catalyses the reaction alpha-D-glucose 1-phosphate + ATP + H(+) = ADP-alpha-D-glucose + diphosphate. It participates in glycan biosynthesis; glycogen biosynthesis. Involved in the biosynthesis of ADP-glucose, a building block required for the elongation reactions to produce glycogen. Catalyzes the reaction between ATP and alpha-D-glucose 1-phosphate (G1P) to produce pyrophosphate and ADP-Glc. This is Glucose-1-phosphate adenylyltransferase from Synechococcus sp. (strain WH7803).